Consider the following 96-residue polypeptide: uncharacterized protein (96 aa).

This is an uncharacterized protein from Saimiriine herpesvirus 2 (strain 11) (SaHV-2).